The sequence spans 122 residues: MTTATRQEVLGLYRSIFRLARKWQATSGQMEDTIKEKQYILNEARTLFRKNKNLTDTDLIKQCIDECTARIEIGLHYKIPYPRPIHLPPMGLTPLRGRGLRSQEKLRKLSKPVYLRSHDEVS.

It belongs to the complex I LYR family. In terms of tissue distribution, high levels in adipose tissue.

The protein resides in the nucleus. May promote cell proliferation and inhibition of apoptosis of preadipocytes. In Homo sapiens (Human), this protein is LYR motif-containing protein 1 (LYRM1).